Here is a 411-residue protein sequence, read N- to C-terminus: Multidrug resistance protein MdtG (411 aa).

10 helical membrane-spanning segments follow: residues 14–34, 56–76, 89–109, 113–133, 144–164, 171–191, 219–239, 254–274, 288–308, and 376–396; these read LFVAWLGCFLTGAAFSLIMPF, LVFSITFLFSAIASPFWGGLA, ALGMSIVMLLMGMAQNIWQFL, AVLGLLGGFIPNANALIATQV, TLSTGGVSGALIGPLIGGLLA, PVFYITAGVLLTCFVLTLLYV, ILSLFVTTMIIQIATGSIAPI, LAFVSGLIASVPGVAALMSAP, ILVFMLIVSVLLLIPMAFVQT, and AVFCVTALVVLFNAVYSWWCL.

It belongs to the major facilitator superfamily. DHA1 family. MdtG (TC 2.A.1.2.20) subfamily.

The protein localises to the cell inner membrane. This is Multidrug resistance protein MdtG from Serratia proteamaculans (strain 568).